A 696-amino-acid polypeptide reads, in one-letter code: Two-component response regulator ORR22 (696 aa).

The Response regulatory domain maps to 27–142 (RVLAVDDDPV…ELRNIWQHVV (116 aa)). Asp-78 bears the 4-aspartylphosphate mark. The segment at 154 to 214 (LDFSKECNKP…DYQENDEPSA (61 aa)) is disordered. The span at 176–185 (TCGSSDQNGR) shows a compositional bias: polar residues. Over residues 195–211 (GEDDDEGDDNDYQENDE) the composition is skewed to acidic residues. Positions 214 to 273 (AAKKPRVVWSVELHRKFVAAVNQLGIDKAVPKRILELMNVEKLTRENVASHLQKYRLYLK) form a DNA-binding region, myb-like GARP.

It belongs to the ARR family. Type-B subfamily. Two-component system major event consists of a His-to-Asp phosphorelay between a sensor histidine kinase (HK) and a response regulator (RR). In plants, the His-to-Asp phosphorelay involves an additional intermediate named Histidine-containing phosphotransfer protein (HPt). This multistep phosphorelay consists of a His-Asp-His-Asp sequential transfer of a phosphate group between first a His and an Asp of the HK protein, followed by the transfer to a conserved His of the HPt protein and finally the transfer to an Asp in the receiver domain of the RR protein.

It localises to the nucleus. Functionally, transcriptional activator that binds specific DNA sequence. Functions as a response regulator involved in His-to-Asp phosphorelay signal transduction system. Phosphorylation of the Asp residue in the receiver domain activates the ability of the protein to promote the transcription of target genes. May directly activate some type-A response regulators in response to cytokinins. Functions as a response regulator in response to cytokinins. The chain is Two-component response regulator ORR22 from Oryza sativa subsp. japonica (Rice).